A 269-amino-acid chain; its full sequence is Neurotrophic factor BDNF precursor form (269 aa).

The signal sequence occupies residues 1-18 (MTILFLTMVISYFSCMRA). The propeptide occupies 19–150 (APLRDAPGMR…AANMSMRVRR (132 aa)). Disordered regions lie at residues 39-61 (AATA…REEL) and 82-104 (AAHV…VATA). An N-linked (GlcNAc...) asparagine glycan is attached at Asn-143. 3 cysteine pairs are disulfide-bonded: Cys-163/Cys-230, Cys-208/Cys-259, and Cys-218/Cys-261.

It belongs to the NGF-beta family.

Functionally, BDNF promotes the survival of neuronal populations that are all located either in the central nervous system or directly connected to it. This Xiphophorus maculatus (Southern platyfish) protein is Neurotrophic factor BDNF precursor form (bdnf).